Consider the following 162-residue polypeptide: Auxin-responsive protein SAUR36 (162 aa).

It belongs to the ARG7 family. Expressed in embryo, endosperm, growing hypocotyls and shoot apical meristems.

Its function is as follows. Acts a positive regulator of leaf senescence and may mediate auxin-induced leaf senescence. Plays a role in the regulation of seed germination by gibberellins and abscisic acid (ABA). Plays a role in the regulation of light-dependent hypocotyl elongation. The polypeptide is Auxin-responsive protein SAUR36 (Arabidopsis thaliana (Mouse-ear cress)).